A 208-amino-acid polypeptide reads, in one-letter code: 2,3-bisphosphoglycerate-dependent phosphoglycerate mutase (208 aa).

Substrate is bound by residues 9–16, 22–23, Arg-61, 88–91, Lys-99, 115–116, and 159–160; these read RHGQSEWN, TG, ERDY, RR, and GN. His-10 serves as the catalytic Tele-phosphohistidine intermediate. The Proton donor/acceptor role is filled by Glu-88.

It belongs to the phosphoglycerate mutase family. BPG-dependent PGAM subfamily. In terms of assembly, homodimer.

The enzyme catalyses (2R)-2-phosphoglycerate = (2R)-3-phosphoglycerate. It participates in carbohydrate degradation; glycolysis; pyruvate from D-glyceraldehyde 3-phosphate: step 3/5. Its function is as follows. Catalyzes the interconversion of 2-phosphoglycerate and 3-phosphoglycerate. The polypeptide is 2,3-bisphosphoglycerate-dependent phosphoglycerate mutase (Methylobacterium sp. (strain 4-46)).